Reading from the N-terminus, the 319-residue chain is Polyprenal reductase (319 aa).

Residues 1-12 are Cytoplasmic-facing; the sequence is MQLVQLLPPGVS. Residues 13-33 form a helical membrane-spanning segment; sequence LLALVWLAVDAAFLTALLLYL. Over 34–79 the chain is Lumenal; that stretch reads QRGCDSGRSLLCSVFQDLIRYGKTKSGLRRPSWLQWFDIPKRCFWH. Residues 80–100 form a helical membrane-spanning segment; sequence FYFVSLVWNGFLLWILLHLLL. Topologically, residues 101–122 are cytoplasmic; it reads QSVPVPEWLQAVLQFLCAGSEP. Residues 123-143 traverse the membrane as a helical segment; sequence QVLGGELSVVLAFSLLWLHSL. Residues 144–158 are Lumenal-facing; that stretch reads RRLLECLFVSIFSNG. A helical membrane pass occupies residues 159 to 179; that stretch reads VIHFVQYCFGLGYYILIGFTI. The Cytoplasmic portion of the chain corresponds to 180-195; that stretch reads LGYCPLDRRTAVSLDD. The helical transmembrane segment at 196 to 216 threads the bilayer; that stretch reads LLMQGNWYHILGLTLYVWASL. The Lumenal segment spans residues 217–266; it reads HQYTCHCILADLRKSASGAIINLKHAVPTGDWFEKVSCPHYFAELLIYLS. A helical transmembrane segment spans residues 267–287; sequence IAVVFGLLNTIWWLVVLYVLL. Residues 288 to 319 are Cytoplasmic-facing; sequence SQALAAVLCHEFYHEKFDSYPIHRKAFIPLIF.

It belongs to the steroid 5-alpha reductase family. Polyprenal reductase subfamily.

The protein resides in the endoplasmic reticulum membrane. It catalyses the reaction a di-trans,poly-cis-dolichal + NADP(+) = a di-trans,poly-cis-polyprenal + NADPH + H(+). It carries out the reaction a 3-oxo-5alpha-steroid + NADP(+) = a 3-oxo-Delta(4)-steroid + NADPH + H(+). The enzyme catalyses androst-4-ene-3,17-dione + NADPH + H(+) = 5alpha-androstan-3,17-dione + NADP(+). The catalysed reaction is 17beta-hydroxy-5alpha-androstan-3-one + NADP(+) = testosterone + NADPH + H(+). It participates in protein modification; protein glycosylation. Its function is as follows. Plays a key role in early steps of protein N-linked glycosylation by being involved in the conversion of polyprenol into dolichol. Acts as a polyprenal reductase that mediates the reduction of polyprenal into dolichal in a NADP-dependent mechanism. Dolichols are required for the synthesis of dolichol-linked monosaccharides and the oligosaccharide precursor used for N-glycosylation. Also able to convert testosterone (T) into 5-alpha-dihydrotestosterone (DHT). The protein is Polyprenal reductase (srd5a3) of Xenopus laevis (African clawed frog).